The primary structure comprises 715 residues: MKPNYKDIDIKSAGFVAKDATRWAEEKGIVADWRTPEQIMVKPLYTKDDLEGMEHLDYVSGLPPFLRGPYSGMYPMRPWTIRQYAGFSTAEESNAFYRRNLASGQKGLSVAFDLATHRGYDADHSRVVGDVGKAGVSICSLEDMKVLFDGIPLSKMSVSMTMNGAVLPILAFYINAGLEQGAKLEEMAGTIQNDILKEFMVRNTYIYPPEFSMRIIADIFEYTSQNMPKFNSISISGYHMQEAGATADIEMAYTLADGMQYLKAGIDAGIDVDAFAPRLSFFWAIGVNHFMEIAKMRAARLLWAKIVKSFGAKNPKSLALRTHSQTSGWSLTEQDPFNNVGRTCIEAMAAALGHTQSLHTNALDEAIALPTDFSARIARNTQIYIQEETLVCKEIDPWGGSYYVESLTNELVHKAWTLIKEVQEMGGMAKAIETGLPKLRIEEAAARTQARIDSHQQVIVGVNKYRLPKEDPIDILEIDNTAVRKQQIERLNDLRSHRDEKAVQEALEAITKCVETKEGNLLDLAVKAAGLRASLGEISDACEKVVGRYKAVIRTISGVYSSESGEDKDFAHAKELAEKFAKKEGRQPRIMIAKMGQDGHDRGAKVVATGYADCGFDVDMGPLFQTPEEAARQAVENDVHVMGVSSLAAGHKTLIPQVIAELEKLGRPDILVTAGGVIPAQDYDFLYQAGVAAIFGPGTPVAYSAAKVLEILLEE.

Residues Tyr-70, Met-73, Arg-77, Thr-80, Arg-82, Tyr-84, and Ser-109 each coordinate (R)-methylmalonyl-CoA. 2 residues coordinate cob(II)alamin: Phe-112 and Ala-134. (R)-methylmalonyl-CoA-binding residues include Thr-190 and Gln-192. Cob(II)alamin contacts are provided by Val-201 and Arg-202. Residues Arg-202, His-239, Arg-278, and Ser-280 each coordinate (R)-methylmalonyl-CoA. 11 residues coordinate cob(II)alamin: Gly-328, Glu-365, Ala-368, Gly-599, His-600, Asp-601, Arg-602, Ser-645, Leu-647, Gly-676, and Thr-699. Residues 587–715 (QPRIMIAKMG…AKVLEILLEE (129 aa)) enclose the B12-binding domain.

This sequence belongs to the methylmalonyl-CoA mutase family. In terms of assembly, heterodimer of an alpha and a beta chain. Requires adenosylcob(III)alamin as cofactor.

The enzyme catalyses (R)-methylmalonyl-CoA = succinyl-CoA. Its function is as follows. Catalyzes the isomerization of succinyl-CoA to methylmalonyl-CoA during synthesis of propionate from tricarboxylic acid-cycle intermediates. The sequence is that of Methylmalonyl-CoA mutase large subunit (mutB) from Porphyromonas gingivalis (strain ATCC BAA-308 / W83).